A 218-amino-acid chain; its full sequence is Oxaloacetate decarboxylase, mitochondrial (218 aa).

Residues methionine 1–tyrosine 18 constitute a mitochondrion transit peptide. Mg(2+) contacts are provided by glutamate 63, glutamate 65, and aspartate 94.

It belongs to the FAH family. Homodimer. It depends on Mg(2+) as a cofactor. Mn(2+) is required as a cofactor.

Its subcellular location is the mitochondrion. It localises to the cytoplasm. The protein localises to the cytosol. The enzyme catalyses a 3-acylpyruvate + H2O = a carboxylate + pyruvate + H(+). The catalysed reaction is acetylpyruvate + H2O = acetate + pyruvate + H(+). It carries out the reaction 3-fumarylpyruvate + H2O = fumarate + pyruvate + H(+). It catalyses the reaction oxaloacetate + H(+) = pyruvate + CO2. Functionally, mitochondrial protein that acts as an oxaloacetate decarboxylase (ODx), catalyzing the decarboxylation of oxaloacetate (OAA) to pyruvate and CO(2), and as such is likely a regulatory enzyme in the TCA cycle. Also displays acylpyruvase activity, being able to hydrolyze acetylpyruvate and fumarylpyruvate in vitro. The chain is Oxaloacetate decarboxylase, mitochondrial (fahd1) from Dictyostelium discoideum (Social amoeba).